The following is a 268-amino-acid chain: Putative F-box protein At3g23420 (268 aa).

Residues 5–51 (PRDLSDLPRNMAEEVLSRVPMTSLRRLRFTCKKWNTLSRCRSFAKKH) enclose the F-box domain.

The sequence is that of Putative F-box protein At3g23420 from Arabidopsis thaliana (Mouse-ear cress).